A 477-amino-acid polypeptide reads, in one-letter code: Ribulose bisphosphate carboxylase large chain (477 aa).

The propeptide occupies 1 to 2 (MS). An N-acetylproline modification is found at Pro-3. Lys-14 is subject to N6,N6,N6-trimethyllysine. 2 residues coordinate substrate: Asn-123 and Thr-173. Lys-175 acts as the Proton acceptor in catalysis. Lys-177 is a substrate binding site. Mg(2+)-binding residues include Lys-201, Asp-203, and Glu-204. Position 201 is an N6-carboxylysine (Lys-201). The Proton acceptor role is filled by His-294. 3 residues coordinate substrate: Arg-295, His-327, and Ser-379.

It belongs to the RuBisCO large chain family. Type I subfamily. As to quaternary structure, heterohexadecamer of 8 large chains and 8 small chains; disulfide-linked. The disulfide link is formed within the large subunit homodimers. Requires Mg(2+) as cofactor. In terms of processing, the disulfide bond which can form in the large chain dimeric partners within the hexadecamer appears to be associated with oxidative stress and protein turnover.

It is found in the plastid. The protein localises to the chloroplast. The enzyme catalyses 2 (2R)-3-phosphoglycerate + 2 H(+) = D-ribulose 1,5-bisphosphate + CO2 + H2O. It catalyses the reaction D-ribulose 1,5-bisphosphate + O2 = 2-phosphoglycolate + (2R)-3-phosphoglycerate + 2 H(+). In terms of biological role, ruBisCO catalyzes two reactions: the carboxylation of D-ribulose 1,5-bisphosphate, the primary event in carbon dioxide fixation, as well as the oxidative fragmentation of the pentose substrate in the photorespiration process. Both reactions occur simultaneously and in competition at the same active site. The protein is Ribulose bisphosphate carboxylase large chain of Nicotiana acuminata (Acuminate tobacco).